The chain runs to 241 residues: MNKDCIFAAPIEKLGDFTFDENVAEVFPDMIQRSVPGYSNIITAIGMFAERFVTANSLVYDLGCSRGAATLSARRHITQPNVKIIGVDNSLPMVERCRQHINAYQSDIPVEILCDDIRNIKIENASMVILNFTLQFVPQQDRQLLLEKIYQGLNPNGGLVLSEKFRFENKKMDDLLIDLHHQFKRANGYSELEVSQKRTALENVMRTDSIETHKERLKSAGFSQIELWFQCFNFGSMVAIK.

S-adenosyl-L-methionine-binding positions include Y38, 63-65 (GCS), 88-89 (DN), 116-117 (DI), N131, and R198.

This sequence belongs to the class I-like SAM-binding methyltransferase superfamily. Cx-SAM synthase family. Homodimer.

The enzyme catalyses prephenate + S-adenosyl-L-methionine = carboxy-S-adenosyl-L-methionine + 3-phenylpyruvate + H2O. Catalyzes the conversion of S-adenosyl-L-methionine (SAM) to carboxy-S-adenosyl-L-methionine (Cx-SAM). The protein is Carboxy-S-adenosyl-L-methionine synthase of Histophilus somni (strain 2336) (Haemophilus somnus).